The chain runs to 82 residues: EMBRYO SURROUNDING FACTOR 1-like protein 10 (82 aa).

The first 22 residues, 1–22 (MSSLYFAILCLFMIFLVPLHEF), serve as a signal peptide directing secretion. Disulfide bonds link C39–C55, C44–C74, C53–C70, and C56–C63.

The protein belongs to the MEG family. In terms of tissue distribution, expressed in stems, leaves and flowers.

The protein is EMBRYO SURROUNDING FACTOR 1-like protein 10 (ESFL10) of Arabidopsis thaliana (Mouse-ear cress).